The following is a 196-amino-acid chain: ATP-dependent Clp protease proteolytic subunit (196 aa).

S101 (nucleophile) is an active-site residue. The active site involves H126.

The protein belongs to the peptidase S14 family. Component of the chloroplastic Clp protease core complex.

It is found in the plastid. It localises to the chloroplast stroma. It carries out the reaction Hydrolysis of proteins to small peptides in the presence of ATP and magnesium. alpha-casein is the usual test substrate. In the absence of ATP, only oligopeptides shorter than five residues are hydrolyzed (such as succinyl-Leu-Tyr-|-NHMec, and Leu-Tyr-Leu-|-Tyr-Trp, in which cleavage of the -Tyr-|-Leu- and -Tyr-|-Trp bonds also occurs).. Cleaves peptides in various proteins in a process that requires ATP hydrolysis. Has a chymotrypsin-like activity. Plays a major role in the degradation of misfolded proteins. This is ATP-dependent Clp protease proteolytic subunit from Pinus thunbergii (Japanese black pine).